A 206-amino-acid polypeptide reads, in one-letter code: Small ribosomal subunit protein uS3 (206 aa).

Residues 39 to 107 (IRSYINESFK…SVEVNVVGVK (69 aa)) enclose the KH type-2 domain.

Belongs to the universal ribosomal protein uS3 family. Part of the 30S ribosomal subunit. Forms a tight complex with proteins S10 and S14.

Binds the lower part of the 30S subunit head. Binds mRNA in the 70S ribosome, positioning it for translation. The sequence is that of Small ribosomal subunit protein uS3 from Wolbachia pipientis subsp. Culex pipiens (strain wPip).